We begin with the raw amino-acid sequence, 189 residues long: Apolipoprotein D (189 aa).

Positions 1-20 (MVMLLLLLSALAGLFGAAEG) are cleaved as a signal peptide. Pyrrolidone carboxylic acid is present on Q21. Cystine bridges form between C28–C134 and C61–C185. N-linked (GlcNAc...) asparagine glycosylation is found at N65 and N98.

It belongs to the calycin superfamily. Lipocalin family. In terms of assembly, homodimer.

Its subcellular location is the secreted. APOD occurs in the macromolecular complex with lecithin-cholesterol acyltransferase. It is probably involved in the transport and binding of bilin. Appears to be able to transport a variety of ligands in a number of different contexts. This Macaca fascicularis (Crab-eating macaque) protein is Apolipoprotein D (APOD).